Consider the following 156-residue polypeptide: Small ribosomal subunit protein uS7 (156 aa).

The protein belongs to the universal ribosomal protein uS7 family. In terms of assembly, part of the 30S ribosomal subunit. Contacts proteins S9 and S11.

Its function is as follows. One of the primary rRNA binding proteins, it binds directly to 16S rRNA where it nucleates assembly of the head domain of the 30S subunit. Is located at the subunit interface close to the decoding center, probably blocks exit of the E-site tRNA. The protein is Small ribosomal subunit protein uS7 of Thermomicrobium roseum (strain ATCC 27502 / DSM 5159 / P-2).